Here is a 578-residue protein sequence, read N- to C-terminus: 15-cis-phytoene desaturase, chloroplastic/chromoplastic (578 aa).

Residues 1–87 (MDTGCLSSMN…PLENTINFLE (87 aa)) constitute a chloroplast and chromoplast transit peptide. FAD-binding positions include Ala115, 134 to 135 (EA), Lys142, 159 to 160 (HI), and Tyr165. Residue Arg300 participates in substrate binding. The FAD site is built by Ile342 and Asp531. Ala539 provides a ligand contact to substrate. FAD is bound at residue Met541.

Belongs to the carotenoid/retinoid oxidoreductase family. As to quaternary structure, homotetramer. Homotetramer is the active form of the enzyme. It depends on FAD as a cofactor.

The protein resides in the plastid. It is found in the chloroplast. It localises to the chromoplast. The protein localises to the membrane. It carries out the reaction 2 a plastoquinone + 15-cis-phytoene = 9,9',15-tri-cis-zeta-carotene + 2 a plastoquinol. The protein operates within carotenoid biosynthesis; lycopene biosynthesis. Its activity is regulated as follows. Inhibited by the herbicide norflurazon (NFZ). Converts phytoene into zeta-carotene via the intermediary of phytofluene by the symmetrical introduction of two double bonds at the C-11 and C-11' positions of phytoene with a concomitant isomerization of two neighboring double bonds at the C9 and C9' positions from trans to cis. Active with decylplastoquinone (DPQ) as substrate. Also active with other benzoquinones, which are strongly preferred over naphthoquinones as substrates. The chain is 15-cis-phytoene desaturase, chloroplastic/chromoplastic (PDS1) from Oryza sativa subsp. indica (Rice).